Reading from the N-terminus, the 215-residue chain is uncharacterized protein (215 aa).

It is found in the mitochondrion. This is an uncharacterized protein from Arabidopsis thaliana (Mouse-ear cress).